The primary structure comprises 505 residues: Catalase (505 aa).

Residues histidine 56 and asparagine 129 contribute to the active site. Tyrosine 339 serves as a coordination point for heme.

This sequence belongs to the catalase family. The cofactor is heme.

The protein resides in the cytoplasm. It catalyses the reaction 2 H2O2 = O2 + 2 H2O. Its function is as follows. Decomposes hydrogen peroxide into water and oxygen; serves to protect cells from the toxic effects of hydrogen peroxide. The protein is Catalase (katA) of Helicobacter pylori (strain J99 / ATCC 700824) (Campylobacter pylori J99).